A 452-amino-acid chain; its full sequence is Nuclear distribution protein PAC1 (452 aa).

Residues 12–44 (QKDELHKAILAYFSASGLSNTGAALREELGVGD) enclose the LisH domain. Residues 64–91 (TGVLRLQKKIMELESRLSSLQSELDSAT) are a coiled coil. WD repeat units lie at residues 117 to 158 (SHRN…RTVK), 160 to 200 (HTKA…KNIR), 204 to 245 (GHDH…CVKT), 248 to 287 (GHSD…HKAT), 290 to 350 (GHEH…LKTL), 352 to 391 (GHDN…RCVK), 396 to 435 (AHSH…INVR), and 437 to 452 (VIAT…VFAS).

Belongs to the WD repeat LIS1/nudF family. In terms of assembly, self-associates. Interacts with NDL1 and dynein.

The protein localises to the cytoplasm. Its subcellular location is the cytoskeleton. It is found in the spindle pole. Functionally, positively regulates the activity of the minus-end directed microtubule motor protein dynein. May enhance dynein-mediated microtubule sliding by targeting dynein to the microtubule plus end. Required for nuclear migration during vegetative growth as well as development. Required for retrograde early endosome (EE) transport from the hyphal tip. Required for localization of dynein to the mitotic spindle poles. Recruits additional proteins to the dynein complex at SPBs. This Tuber melanosporum (strain Mel28) (Perigord black truffle) protein is Nuclear distribution protein PAC1.